The following is a 261-amino-acid chain: Transmembrane protein 106A (261 aa).

The chain crosses the membrane as a helical span at residues 95–115 (VFLAVSICLVTSSLIIFFLFP).

The protein belongs to the TMEM106 family.

The protein localises to the cell membrane. Activates macrophages and polarizes them into M1-like macrophages through the activation of the MAPK and NF-kappaB signaling pathway. Upon activation, up-regulates the expression of CD80, CD86, CD69 and MHC II on macrophages, and induces the release of pro-inflammatory cytokines such as TNF, IL1B, IL6, CCL2 and nitric oxide. May play a role in inhibition of proliferation and migration. In Bos taurus (Bovine), this protein is Transmembrane protein 106A (TMEM106A).